Here is a 189-residue protein sequence, read N- to C-terminus: Lumazine protein (189 aa).

2 Lumazine-binding repeats span residues 1–96 and 97–189; these read MFKG…LGKG and ALTG…SNEW.

Requires 6,7-dimethyl-8-(1-D-ribityl)lumazine as cofactor.

Functionally, antenna protein that modulates the color of the bioluminescence emission of the luciferase. In the presence of LumP, luciferase emission is shifted to higher energy values (shorter wavelength). The protein is Lumazine protein (luxL) of Photobacterium phosphoreum.